Reading from the N-terminus, the 173-residue chain is Small ribosomal subunit protein uS9 (173 aa).

The span at 1–15 (MTDTPTENLENTEVT) shows a compositional bias: polar residues. 2 disordered regions span residues 1-26 (MTDT…EIAY) and 135-173 (EASR…YSKR). A compositionally biased stretch (basic residues) spans 154 to 173 (KERKKAGLKKARKAPQYSKR).

The protein belongs to the universal ribosomal protein uS9 family.

The sequence is that of Small ribosomal subunit protein uS9 from Cutibacterium acnes (strain DSM 16379 / KPA171202) (Propionibacterium acnes).